The following is a 98-amino-acid chain: NADH-ubiquinone oxidoreductase chain 4L (98 aa).

The next 3 helical transmembrane spans lie at 1–21 (MTTIYLNLILAFTLALSGVLI), 26–46 (LLSTLLCLEGMMLSLFILMAL), and 59–79 (APLILLVFSACEAGVGLALLV).

Belongs to the complex I subunit 4L family. As to quaternary structure, core subunit of respiratory chain NADH dehydrogenase (Complex I) which is composed of 45 different subunits.

It is found in the mitochondrion inner membrane. It catalyses the reaction a ubiquinone + NADH + 5 H(+)(in) = a ubiquinol + NAD(+) + 4 H(+)(out). Functionally, core subunit of the mitochondrial membrane respiratory chain NADH dehydrogenase (Complex I) which catalyzes electron transfer from NADH through the respiratory chain, using ubiquinone as an electron acceptor. Part of the enzyme membrane arm which is embedded in the lipid bilayer and involved in proton translocation. The polypeptide is NADH-ubiquinone oxidoreductase chain 4L (MT-ND4L) (Rhyncholestes raphanurus (Chilean shrew opossum)).